We begin with the raw amino-acid sequence, 158 residues long: Large ribosomal subunit protein uL16 (158 aa).

This sequence belongs to the universal ribosomal protein uL16 family. As to quaternary structure, part of the 50S ribosomal subunit.

Binds 23S rRNA and is also seen to make contacts with the A and possibly P site tRNAs. In Prochlorococcus marinus (strain MIT 9303), this protein is Large ribosomal subunit protein uL16.